A 608-amino-acid chain; its full sequence is UvrABC system protein C (608 aa).

A GIY-YIG domain is found at 16–94 (NRPGVYRMFD…IKEWRPPYNI (79 aa)). The UVR domain occupies 204 to 239 (NALADELNVGMEQAAMRLDFEKAAELRDQVAILRRV).

This sequence belongs to the UvrC family. In terms of assembly, interacts with UvrB in an incision complex.

The protein localises to the cytoplasm. The UvrABC repair system catalyzes the recognition and processing of DNA lesions. UvrC both incises the 5' and 3' sides of the lesion. The N-terminal half is responsible for the 3' incision and the C-terminal half is responsible for the 5' incision. This Pseudomonas aeruginosa (strain LESB58) protein is UvrABC system protein C.